Reading from the N-terminus, the 172-residue chain is Small ribosomal subunit protein uS5 (172 aa).

Residues 15–78 form the S5 DRBM domain; the sequence is LNDKLIFINR…ANAKRNLSRI (64 aa).

It belongs to the universal ribosomal protein uS5 family. In terms of assembly, part of the 30S ribosomal subunit. Contacts proteins S4 and S8.

Its function is as follows. With S4 and S12 plays an important role in translational accuracy. Functionally, located at the back of the 30S subunit body where it stabilizes the conformation of the head with respect to the body. The chain is Small ribosomal subunit protein uS5 from Dehalococcoides mccartyi (strain CBDB1).